Here is a 64-residue protein sequence, read N- to C-terminus: Fatty acid synthase (64 aa).

The region spanning 1-64 is the Carrier domain; the sequence is AEGEGQRDLL…VLSMREVRQL (64 aa). S38 carries the O-(pantetheine 4'-phosphoryl)serine; alternate modification. Position 38 is a phosphoserine; alternate (S38).

In terms of assembly, homodimer which is arranged in a head to tail fashion. Interacts with CEACAM1; this interaction is insulin and phosphorylation-dependent; reduces fatty-acid synthase activity.

It is found in the cytoplasm. The protein localises to the melanosome. It catalyses the reaction acetyl-CoA + n malonyl-CoA + 2n NADPH + 2n H(+) = a long-chain fatty acid + (n+1) CoA + n CO2 + 2n NADP(+).. Its function is as follows. Fatty acid synthetase catalyzes the formation of long-chain fatty acids from acetyl-CoA, malonyl-CoA and NADPH. This multifunctional protein has 7 catalytic activities as an acyl carrier protein. This is Fatty acid synthase (FASN) from Oryctolagus cuniculus (Rabbit).